Reading from the N-terminus, the 421-residue chain is UDP-N-acetylglucosamine 1-carboxyvinyltransferase (421 aa).

22-23 (KN) is a binding site for phosphoenolpyruvate. A UDP-N-acetyl-alpha-D-glucosamine-binding site is contributed by R91. Residue C115 is the Proton donor of the active site. Residue C115 is modified to 2-(S-cysteinyl)pyruvic acid O-phosphothioketal. UDP-N-acetyl-alpha-D-glucosamine contacts are provided by residues 120–124 (RPVDL), 160–163 (KVSV), D305, and I327.

The protein belongs to the EPSP synthase family. MurA subfamily.

The protein resides in the cytoplasm. It catalyses the reaction phosphoenolpyruvate + UDP-N-acetyl-alpha-D-glucosamine = UDP-N-acetyl-3-O-(1-carboxyvinyl)-alpha-D-glucosamine + phosphate. Its pathway is cell wall biogenesis; peptidoglycan biosynthesis. Its function is as follows. Cell wall formation. Adds enolpyruvyl to UDP-N-acetylglucosamine. This chain is UDP-N-acetylglucosamine 1-carboxyvinyltransferase, found in Photorhabdus laumondii subsp. laumondii (strain DSM 15139 / CIP 105565 / TT01) (Photorhabdus luminescens subsp. laumondii).